Consider the following 119-residue polypeptide: Ribonuclease P protein component (119 aa).

The protein belongs to the RnpA family. In terms of assembly, consists of a catalytic RNA component (M1 or rnpB) and a protein subunit.

The enzyme catalyses Endonucleolytic cleavage of RNA, removing 5'-extranucleotides from tRNA precursor.. Functionally, RNaseP catalyzes the removal of the 5'-leader sequence from pre-tRNA to produce the mature 5'-terminus. It can also cleave other RNA substrates such as 4.5S RNA. The protein component plays an auxiliary but essential role in vivo by binding to the 5'-leader sequence and broadening the substrate specificity of the ribozyme. The sequence is that of Ribonuclease P protein component from Klebsiella pneumoniae (strain 342).